The chain runs to 280 residues: Cobalt import ATP-binding protein CbiO (280 aa).

The region spanning 2–236 (IEVRDLRFHY…GDWLRQQGLG (235 aa)) is the ABC transporter domain. Position 36–43 (36–43 (GANGCGKT)) interacts with ATP.

The protein belongs to the ABC transporter superfamily. Cobalt importer (TC 3.A.1.18.1) family. As to quaternary structure, forms an energy-coupling factor (ECF) transporter complex composed of an ATP-binding protein (A component, CbiO), a transmembrane protein (T component, CbiQ) and 2 possible substrate-capture proteins (S components, CbiM and CbiN) of unknown stoichimetry.

Its subcellular location is the cell inner membrane. Its pathway is cofactor biosynthesis; adenosylcobalamin biosynthesis. Its function is as follows. Part of the energy-coupling factor (ECF) transporter complex CbiMNOQ involved in cobalt import. Presumably responsible for energy coupling to the transport system. This Syntrophus aciditrophicus (strain SB) protein is Cobalt import ATP-binding protein CbiO.